The following is an 861-amino-acid chain: Leucine--tRNA ligase (861 aa).

The 'HIGH' region signature appears at Pro42 to His52. A 'KMSKS' region motif is present at residues Lys619–Ser623. Lys622 contacts ATP.

Belongs to the class-I aminoacyl-tRNA synthetase family.

It localises to the cytoplasm. The enzyme catalyses tRNA(Leu) + L-leucine + ATP = L-leucyl-tRNA(Leu) + AMP + diphosphate. The polypeptide is Leucine--tRNA ligase (Haemophilus influenzae (strain ATCC 51907 / DSM 11121 / KW20 / Rd)).